A 345-amino-acid polypeptide reads, in one-letter code: Protein PXR1 (345 aa).

Disordered regions lie at residues 1–25 and 166–317; these read MGLA…SNNN and VEDE…ASRL. The G-patch domain occupies 25–71; the sequence is NNQFGHQYLTKMGWTPGKGIGLVPDSITTHLKINIKTDNAGLGAKLQ. The segment covering 187–227 has biased composition (basic residues); sequence KKEKKEKKEKKEKKEKKEKKEKKEKKEKKEKKEKKEKKEKK. Over residues 228-237 the composition is skewed to basic and acidic residues; that stretch reads EKKEKSDKKE. Positions 238–278 are enriched in basic residues; the sequence is KKEKKDKKEKKEKKEKKEKKEKKEKKEKKEKKEKKEKKEKK. The segment covering 279–288 has biased composition (basic and acidic residues); that stretch reads EKKDKLDKES. Over residues 289–312 the composition is skewed to polar residues; that stretch reads SNAANVESTKSLVSDSSRESTPTP.

Belongs to the PINX1 family.

Its subcellular location is the nucleus. The protein localises to the nucleolus. Involved in rRNA-processing at A0, A1 and A2 sites and negatively regulates telomerase. In Lodderomyces elongisporus (strain ATCC 11503 / CBS 2605 / JCM 1781 / NBRC 1676 / NRRL YB-4239) (Yeast), this protein is Protein PXR1 (PXR1).